The primary structure comprises 169 residues: S-ribosylhomocysteine lyase (169 aa).

Fe cation is bound by residues His54, His58, and Cys128.

Belongs to the LuxS family. In terms of assembly, homodimer. The cofactor is Fe cation.

The enzyme catalyses S-(5-deoxy-D-ribos-5-yl)-L-homocysteine = (S)-4,5-dihydroxypentane-2,3-dione + L-homocysteine. Its function is as follows. Involved in the synthesis of autoinducer 2 (AI-2) which is secreted by bacteria and is used to communicate both the cell density and the metabolic potential of the environment. The regulation of gene expression in response to changes in cell density is called quorum sensing. Catalyzes the transformation of S-ribosylhomocysteine (RHC) to homocysteine (HC) and 4,5-dihydroxy-2,3-pentadione (DPD). This Aeromonas hydrophila subsp. hydrophila (strain ATCC 7966 / DSM 30187 / BCRC 13018 / CCUG 14551 / JCM 1027 / KCTC 2358 / NCIMB 9240 / NCTC 8049) protein is S-ribosylhomocysteine lyase.